The sequence spans 748 residues: Catalase-peroxidase (748 aa).

The span at 1–16 (MSSDTSASRPPQPDTR) shows a compositional bias: polar residues. The segment at 1-43 (MSSDTSASRPPQPDTRTASKSESENPAIPSPHPKSNAPLTNRD) is disordered. A cross-link (tryptophyl-tyrosyl-methioninium (Trp-Tyr) (with M-264)) is located at residues 113–238 (WHAAGTYRIH…YGATTMGLIY (126 aa)). Histidine 114 acts as the Proton acceptor in catalysis. Positions 238-264 (YVNPEGPEGKPDPIAAAIDIRETFGRM) form a cross-link, tryptophyl-tyrosyl-methioninium (Tyr-Met) (with W-113). Histidine 279 contacts heme b.

The protein belongs to the peroxidase family. Peroxidase/catalase subfamily. In terms of assembly, homodimer or homotetramer. Heme b serves as cofactor. Post-translationally, formation of the three residue Trp-Tyr-Met cross-link is important for the catalase, but not the peroxidase activity of the enzyme.

It catalyses the reaction H2O2 + AH2 = A + 2 H2O. It carries out the reaction 2 H2O2 = O2 + 2 H2O. In terms of biological role, bifunctional enzyme with both catalase and broad-spectrum peroxidase activity. The protein is Catalase-peroxidase of Mycolicibacterium paratuberculosis (strain ATCC BAA-968 / K-10) (Mycobacterium paratuberculosis).